The primary structure comprises 535 residues: Mannan polymerase I complex VAN1 subunit (535 aa).

At 1-64 (MGMFFNLRSN…STPSKFQLTV (64 aa)) the chain is on the cytoplasmic side. Positions 22 to 48 (LPISRNGSSNNIKDKRSEHNSNSLKGK) are disordered. S25 is subject to Phosphoserine. A helical; Signal-anchor for type II membrane protein membrane pass occupies residues 65-81 (SITSLIIIAVLSLYLFI). Residues 82–535 (SFLSGMGIGV…REREKRRQSE (454 aa)) are Lumenal-facing. Residues N215 and N251 are each glycosylated (N-linked (GlcNAc...) asparagine).

This sequence belongs to the ANP1/MMN9/VAN1 family. In terms of assembly, component of the M-Pol I complex which contains MNN9 and VAN1. In terms of processing, glycosylated.

Its subcellular location is the endoplasmic reticulum membrane. It localises to the golgi apparatus membrane. In terms of biological role, involved in regulation of the phosphorylation of a number of proteins, some of which appear to be important in cell growth control. Its function is as follows. The M-Pol I complex possesses alpha-1,6-mannosyltransferase activity and is probably involved in the elongation of the mannan backbone of N-linked glycans on cell wall and periplasmic proteins. In Saccharomyces cerevisiae (strain ATCC 204508 / S288c) (Baker's yeast), this protein is Mannan polymerase I complex VAN1 subunit (VAN1).